The following is a 368-amino-acid chain: Isopentenyl-diphosphate delta-isomerase (368 aa).

7–8 (RK) serves as a coordination point for substrate. Residues Thr65, 66 to 68 (GMT), Ser96, and Asn125 contribute to the FMN site. 96–98 (SQR) is a substrate binding site. Gln160 contacts substrate. Glu161 provides a ligand contact to Mg(2+). Residues Lys193, Ser218, Thr223, 275–277 (GIR), and 296–297 (AL) each bind FMN.

The protein belongs to the IPP isomerase type 2 family. Homooctamer. Dimer of tetramers. FMN serves as cofactor. Requires NADPH as cofactor. It depends on Mg(2+) as a cofactor.

Its subcellular location is the cytoplasm. It carries out the reaction isopentenyl diphosphate = dimethylallyl diphosphate. Involved in the biosynthesis of isoprenoids. Catalyzes the 1,3-allylic rearrangement of the homoallylic substrate isopentenyl (IPP) to its allylic isomer, dimethylallyl diphosphate (DMAPP). The protein is Isopentenyl-diphosphate delta-isomerase of Saccharolobus islandicus (strain M.16.27) (Sulfolobus islandicus).